Consider the following 567-residue polypeptide: Diacylglycerol kinase epsilon (567 aa).

The chain crosses the membrane as a helical span at residues 22–42 (LILWTLCSVLLPVFITFWCSL). 2 Phorbol-ester/DAG-type zinc fingers span residues 59-108 (KHGW…RFQC) and 124-177 (PHHW…NEKC). In terms of domain architecture, DAGKc spans 215 to 356 (KQWTPLIILA…LDRWKVQVTN (142 aa)).

This sequence belongs to the eukaryotic diacylglycerol kinase family. As to expression, expressed predominantly in testis. Expressed in endothelium, platelets and podocytes (at protein level).

The protein resides in the membrane. It is found in the cytoplasm. The catalysed reaction is a 1,2-diacyl-sn-glycerol + ATP = a 1,2-diacyl-sn-glycero-3-phosphate + ADP + H(+). It carries out the reaction 1-hexadecanoyl-2-(5Z,8Z,11Z,14Z-eicosatetraenoyl)-sn-glycerol + ATP = 1-hexadecanoyl-2-(5Z,8Z,11Z,14Z-eicosatetraenoyl)-sn-glycero-3-phosphate + ADP + H(+). The enzyme catalyses 1-octadecanoyl-2-(5Z,8Z,11Z,14Z-eicosatetraenoyl)-sn-glycerol + ATP = 1-octadecanoyl-2-(5Z,8Z,11Z,14Z-eicosatetraenoyl)-sn-glycero-3-phosphate + ADP + H(+). It catalyses the reaction 1-eicosanoyl-2-(5Z,8Z,11Z,14Z)-eicosatetraenoyl-sn-glycerol + ATP = 1-eicosanoyl-2-(5Z,8Z,11Z,14Z)-eicosatetraenoyl-sn-glycero-3-phosphate + ADP + H(+). The catalysed reaction is 1,2-di-(5Z,8Z,11Z,14Z)-eicosatetraenoyl-sn-glycerol + ATP = 1,2-di-(5Z,8Z,11Z,14Z)-eicosatetraenoyl-sn-glycero-3-phosphate + ADP + H(+). It carries out the reaction 1-octadecanoyl-2-(9Z,12Z)-octadecadienoyl-sn-glycerol + ATP = 1-octadecanoyl-2-(9Z,12Z-octadecadienoyl)-sn-glycero-3-phosphate + ADP + H(+). The enzyme catalyses 1,2-di-(9Z,12Z-octadecadienoyl)-sn-glycerol + ATP = 1,2-di-(9Z,12Z-octadecadienoyl)-sn-glycero-3-phosphate + ADP + H(+). It catalyses the reaction 1,2-di-(9Z-octadecenoyl)-sn-glycerol + ATP = 1,2-di-(9Z-octadecenoyl)-sn-glycero-3-phosphate + ADP + H(+). It participates in lipid metabolism; glycerolipid metabolism. With respect to regulation, undergoes competitive inhibition by its own product 1,2-diacyl-sn-glycero-3-phosphate/phosphatidic acid. The strongest inhibition being observed in vitro with 1-octadecanoyl-2-(5Z,8Z,11Z,14Z-eicosatetraenoyl)-sn-glycero-3-phosphate, a major intermediate in the phosphatidylinositol turnover cycle and more generally by diacylglycerols with an arachidonoyl acyl chain at the sn-2 position. In terms of biological role, membrane-bound diacylglycerol kinase that converts diacylglycerol/DAG into phosphatidic acid/phosphatidate/PA and regulates the respective levels of these two bioactive lipids. Thereby, acts as a central switch between the signaling pathways activated by these second messengers with different cellular targets and opposite effects in numerous biological processes. Also plays an important role in the biosynthesis of complex lipids. Displays specificity for diacylglycerol substrates with an arachidonoyl acyl chain at the sn-2 position, with the highest activity toward 1-octadecanoyl-2-(5Z,8Z,11Z,14Z-eicosatetraenoyl)-sn-glycerol the main diacylglycerol intermediate within the phosphatidylinositol turnover cycle. Can also phosphorylate diacylglycerol substrates with a linoleoyl acyl chain at the sn-2 position but much less efficiently. This chain is Diacylglycerol kinase epsilon (DGKE), found in Homo sapiens (Human).